The primary structure comprises 1013 residues: Tolloid-like protein 1 (1013 aa).

Positions 1–30 are cleaved as a signal peptide; that stretch reads MGLGTLSPRMLVWLVASGIVFYGELWVCAG. The propeptide occupies 31-147; sequence LDYDYTFDGN…GQNEKNRVPR (117 aa). Positions 148–347 constitute a Peptidase M12A domain; sequence AATSRTERIW…AQARKLYRCP (200 aa). N169 carries an N-linked (GlcNAc...) asparagine glycan. Cystine bridges form between C190-C346, C210-C232, C212-C213, and C349-C375. H240 serves as a coordination point for Zn(2+). E241 is a catalytic residue. Zn(2+) contacts are provided by H244 and H250. CUB domains are found at residues 349-461 and 462-574; these read CGET…YEAI and CGGE…FFKE. Residues N359 and N390 are each glycosylated (N-linked (GlcNAc...) asparagine). Cystine bridges form between C402–C424, C462–C488, C515–C537, C578–C590, C586–C599, C601–C614, C618–C644, C671–C693, C734–C745, C741–C754, C756–C769, C774–C800, C827–C849, C887–C917, and C944–C966. The region spanning 574 to 615 is the EGF-like 1; calcium-binding domain; that stretch reads EEDECAKPDRGGCEQRCLNTLGSYQCACEPGYELGPDRRSCE. The CUB 3 domain maps to 618–730; that stretch reads CGGLLTKLNG…KGFKAHFFSD (113 aa). N626 is a glycosylation site (N-linked (GlcNAc...) asparagine). One can recognise an EGF-like 2; calcium-binding domain in the interval 730–770; it reads DKDECSKDNGGCQHECVNTMGSYMCQCRNGFVLHDNKHDCK. CUB domains follow at residues 774-886 and 887-1003; these read CEQK…HSTE and CGGR…YKSI.

Zn(2+) serves as cofactor.

The protein localises to the secreted. Protease which processes procollagen C-propeptides, such as chordin, pro-biglycan and pro-lysyl oxidase. Required for the embryonic development. Predominant protease, which in the development, influences dorsal-ventral patterning and skeletogenesis. The polypeptide is Tolloid-like protein 1 (TLL1) (Homo sapiens (Human)).